The sequence spans 224 residues: Mammalian ependymin-related protein 1 (224 aa).

The N-terminal stretch at 1–37 is a signal peptide; the sequence is MPGRAPLHTVPGALGPWLLGCLWAWTLCGLCSLGAVG. 3 disulfides stabilise this stretch: Cys42/Cys172, Cys88/Cys222, and Cys113/Cys210. N-linked (GlcNAc...) asparagine glycans are attached at residues Asn130 and Asn182.

It belongs to the ependymin family. In terms of assembly, homodimer. In terms of processing, N-glycosylated; the glycan contains mannose-6-phosphate moieties.

The protein localises to the lysosome lumen. Its subcellular location is the secreted. Binds anionic lipids and gangliosides at acidic pH. The sequence is that of Mammalian ependymin-related protein 1 (EPDR1) from Macaca fascicularis (Crab-eating macaque).